A 204-amino-acid chain; its full sequence is Large ribosomal subunit protein uL4 (204 aa).

The disordered stretch occupies residues 48–75 (HTKGRSDVSGGGKKPWRQKGRGGARAGS).

Belongs to the universal ribosomal protein uL4 family. Part of the 50S ribosomal subunit.

Its function is as follows. One of the primary rRNA binding proteins, this protein initially binds near the 5'-end of the 23S rRNA. It is important during the early stages of 50S assembly. It makes multiple contacts with different domains of the 23S rRNA in the assembled 50S subunit and ribosome. Functionally, forms part of the polypeptide exit tunnel. The sequence is that of Large ribosomal subunit protein uL4 from Campylobacter fetus subsp. fetus (strain 82-40).